We begin with the raw amino-acid sequence, 329 residues long: DNA-directed RNA polymerase subunit alpha (329 aa).

Positions 1–235 are alpha N-terminal domain (alpha-NTD); it reads MQGSVTEFLK…EQLDAFVDLR (235 aa). The alpha C-terminal domain (alpha-CTD) stretch occupies residues 249-329; that stretch reads FDPILLRPVD…NWPPASIAED (81 aa).

Belongs to the RNA polymerase alpha chain family. Homodimer. The RNAP catalytic core consists of 2 alpha, 1 beta, 1 beta' and 1 omega subunit. When a sigma factor is associated with the core the holoenzyme is formed, which can initiate transcription.

It catalyses the reaction RNA(n) + a ribonucleoside 5'-triphosphate = RNA(n+1) + diphosphate. In terms of biological role, DNA-dependent RNA polymerase catalyzes the transcription of DNA into RNA using the four ribonucleoside triphosphates as substrates. The polypeptide is DNA-directed RNA polymerase subunit alpha (Histophilus somni (strain 129Pt) (Haemophilus somnus)).